Consider the following 1382-residue polypeptide: Eukaryotic translation initiation factor 3 subunit A (1382 aa).

Lys68 is subject to N6-acetyllysine. Positions 82-120 (NIKSLEDVVRAYLKMAEEKTEAAKEESQQMVLDIEDLDN) form a coiled coil. The PCI domain occupies 315 to 498 (MQRMSTRVLL…RTLSFGSDLN (184 aa)). 2 positions are modified to phosphoserine: Ser492 and Ser584. Positions 664-835 (LDPDFIMAKQ…REERERAERA (172 aa)) are interaction with EIF3B. 2 disordered regions span residues 810–844 (KEEEEQRRAEEQMLKEREERERAERAKREEELREY) and 866–1382 (EERE…TVRR). Composition is skewed to basic and acidic residues over residues 866–1165 (EERE…DDSR), 1177–1328 (GWRE…DPPR), and 1336–1371 (SRDRERDRDREREGEKEKASWRAEKDRESLRRTKNE). Phosphoserine occurs at positions 881, 882, and 895. Repeat 1 spans residues 925–934 (DEDRSHRRDE). The interval 925 to 1172 (DEDRSHRRDE…DSRPGPWRPL (248 aa)) is 25 X 10 AA approximate tandem repeats of [DE]-[DE]-[DE]-R-[SEVGFPILV]-[HPSN]-[RSW]-[RL]-[DRGTIHN]-[EPMANLGDT]. One copy of the 2; truncated repeat lies at 935–942 (ERPRRLGD). 20 consecutive repeat copies span residues 943–952 (DEDREPSLRP), 953–962 (DDDRVPRRGM), 963–972 (DDDRGPRRGP), 973–982 (EEDRFSRRGA), 983–992 (DDDRPSWRNT), 993–1002 (DDDRPPRRIA), 1003–1012 (DEDRGNWRHA), 1013–1022 (DDDRPPRRGL), 1023–1032 (DEDRGSWRTA), 1033–1042 (DEDRGPRRGM), 1043–1052 (DDDRGPRRGG), 1054–1063 (DDERSSWRNA), 1064–1073 (DDDRGPRRGL), 1074–1083 (DDDRGPRRGM), 1084–1093 (DDDRGPRRGM), 1094–1103 (DDDRGPRRGM), 1104–1113 (DDDRGPRRGL), 1114–1123 (DDDRGPWRNA), 1124–1133 (DDDRIPRRGA), and 1134–1143 (EDDRGPWRNM). Ser949 is modified (phosphoserine). Position 1028 is a phosphoserine (Ser1028). A 23; truncated repeat occupies 1144-1152 (DDDRLSRRA). Copy 24 of the repeat occupies 1153–1162 (DDDRFPRRGD). Residues 1163 to 1172 (DSRPGPWRPL) form a 25; approximate repeat. 5 positions are modified to phosphoserine: Ser1188, Ser1198, Ser1262, Ser1336, and Ser1364.

Interacts with EIF4G1. Component of the eukaryotic translation initiation factor 3 (eIF-3) complex, which is composed of 13 subunits: EIF3A, EIF3B, EIF3C, EIF3D, EIF3E, EIF3F, EIF3G, EIF3H, EIF3I, EIF3J, EIF3K, EIF3L and EIF3M. The eIF-3 complex appears to include 3 stable modules: module A is composed of EIF3A, EIF3B, EIF3G and EIF3I; module B is composed of EIF3F, EIF3H, and EIF3M; and module C is composed of EIF3C, EIF3D, EIF3E, EIF3L and EIF3K. EIF3C of module C binds EIF3B of module A and EIF3H of module B, thereby linking the three modules. EIF3J is a labile subunit that binds to the eIF-3 complex via EIF3B. The eIF-3 complex interacts with RPS6KB1 under conditions of nutrient depletion. Mitogenic stimulation leads to binding and activation of a complex composed of MTOR and RPTOR, leading to phosphorylation and release of RPS6KB1 and binding of EIF4B to eIF-3. Also interacts with KRT7 and PIWIL2. Post-translationally, phosphorylated. Phosphorylation is enhanced upon serum stimulation.

The protein resides in the cytoplasm. Functionally, RNA-binding component of the eukaryotic translation initiation factor 3 (eIF-3) complex, which is required for several steps in the initiation of protein synthesis. The eIF-3 complex associates with the 40S ribosome and facilitates the recruitment of eIF-1, eIF-1A, eIF-2:GTP:methionyl-tRNAi and eIF-5 to form the 43S pre-initiation complex (43S PIC). The eIF-3 complex stimulates mRNA recruitment to the 43S PIC and scanning of the mRNA for AUG recognition. The eIF-3 complex is also required for disassembly and recycling of post-termination ribosomal complexes and subsequently prevents premature joining of the 40S and 60S ribosomal subunits prior to initiation. The eIF-3 complex specifically targets and initiates translation of a subset of mRNAs involved in cell proliferation, including cell cycling, differentiation and apoptosis, and uses different modes of RNA stem-loop binding to exert either translational activation or repression. In terms of biological role, (Microbial infection) Essential for the initiation of translation on type-1 viral ribosomal entry sites (IRESs), like for HCV, PV, EV71 or BEV translation. Its function is as follows. (Microbial infection) In case of FCV infection, plays a role in the ribosomal termination-reinitiation event leading to the translation of VP2. The polypeptide is Eukaryotic translation initiation factor 3 subunit A (Homo sapiens (Human)).